Reading from the N-terminus, the 263-residue chain is Transmembrane protein 176B (263 aa).

4 helical membrane-spanning segments follow: residues 61-81 (LGVTQILLGLVSCALGVCLYF), 89-109 (AFGCAFWSGSVAILAGVGTIV), 121-141 (VSCLLLLACIATAAAATVLGV), and 197-217 (LFLAFCIMLTVVCILEIVVSV). Phosphoserine is present on residues Ser-231, Ser-240, and Ser-253. The segment at 239–263 (ESERKLLDGHPAPASPAKEKIPAIL) is disordered.

Belongs to the TMEM176 family. As to expression, ubiquitously expressed with higher expression in lung, liver, kidney and colon. Expressed in cerebellar granule cells.

The protein localises to the nucleus membrane. May play a role in the process of maturation of dendritic cells. Required for the development of cerebellar granule cells. This Mus musculus (Mouse) protein is Transmembrane protein 176B (Tmem176b).